The primary structure comprises 80 residues: uncharacterized protein (80 aa).

Its function is as follows. Essential for virus function. This is an uncharacterized protein from Sulfolobus spindle-shape virus 1 (SSV1).